The chain runs to 251 residues: Imidazole glycerol phosphate synthase subunit HisF (251 aa).

Residues Asp11 and Asp130 contribute to the active site.

Belongs to the HisA/HisF family. In terms of assembly, heterodimer of HisH and HisF.

It localises to the cytoplasm. The enzyme catalyses 5-[(5-phospho-1-deoxy-D-ribulos-1-ylimino)methylamino]-1-(5-phospho-beta-D-ribosyl)imidazole-4-carboxamide + L-glutamine = D-erythro-1-(imidazol-4-yl)glycerol 3-phosphate + 5-amino-1-(5-phospho-beta-D-ribosyl)imidazole-4-carboxamide + L-glutamate + H(+). It participates in amino-acid biosynthesis; L-histidine biosynthesis; L-histidine from 5-phospho-alpha-D-ribose 1-diphosphate: step 5/9. In terms of biological role, IGPS catalyzes the conversion of PRFAR and glutamine to IGP, AICAR and glutamate. The HisF subunit catalyzes the cyclization activity that produces IGP and AICAR from PRFAR using the ammonia provided by the HisH subunit. This is Imidazole glycerol phosphate synthase subunit HisF from Flavobacterium johnsoniae (strain ATCC 17061 / DSM 2064 / JCM 8514 / BCRC 14874 / CCUG 350202 / NBRC 14942 / NCIMB 11054 / UW101) (Cytophaga johnsonae).